The sequence spans 895 residues: Stonin-2 (895 aa).

3 disordered regions span residues 10 to 101 (THQS…AISN), 144 to 204 (ASES…METI), and 236 to 279 (NEVG…PKST). A compositionally biased stretch (basic and acidic residues) spans 64–73 (SHSEQDDSSE). Composition is skewed to polar residues over residues 145–169 (SESS…TDLQ) and 179–193 (GRAS…SSSL). Ser278, Ser284, and Ser299 each carry phosphoserine. Disordered stretches follow at residues 291–326 (ISSL…SPIN) and 386–424 (QIDD…PRDG). 2 consecutive short sequence motifs (NPF) follow at residues 310–312 (NPF) and 326–328 (NPF). Residues 311–323 (PFLNESLQDIQPS) are compositionally biased toward polar residues. Residues 424–557 (GWPMMLRIPE…DLPVQSMDLS (134 aa)) enclose the SHD domain. The MHD domain occupies 565-872 (EEEITVDIRD…AHYSYKVEIE (308 aa)). The residue at position 759 (Ser759) is a Phosphoserine.

Belongs to the Stoned B family. Interacts with the second C2 domain of synaptotagmins SYT1 and SYT2. Interacts with EPS15, EPS15R and ITSN1. Interacts indirectly with the AP-2 adapter complex. Interacts with TOR1A and COPS4; the interaction controls STON2 protein stability. Phosphorylated in vitro by PKD. In terms of processing, neddylated and ubiquitinated; leading to its degradation and inhibited by TOR1A and COPS4.

It is found in the synapse. The protein localises to the synaptosome. It localises to the cytoplasm. The protein resides in the membrane. Its function is as follows. Adapter protein involved in endocytic machinery. Involved in the synaptic vesicle recycling. May facilitate clathrin-coated vesicle uncoating. This chain is Stonin-2 (Ston2), found in Rattus norvegicus (Rat).